The primary structure comprises 310 residues: 2-methoxy-6-polyprenyl-1,4-benzoquinol methylase, mitochondrial (310 aa).

The transit peptide at 1 to 6 directs the protein to the mitochondrion; sequence MAHMRS. S-adenosyl-L-methionine is bound by residues Thr-99, Asp-154, and 182 to 183; that span reads DA.

Belongs to the class I-like SAM-binding methyltransferase superfamily. MenG/UbiE family. As to quaternary structure, component of a multi-subunit COQ enzyme complex, composed of at least coq3, coq4, coq5, coq6, coq7 and coq9.

It is found in the mitochondrion inner membrane. The catalysed reaction is a 2-methoxy-6-(all-trans-polyprenyl)benzene-1,4-diol + S-adenosyl-L-methionine = a 5-methoxy-2-methyl-3-(all-trans-polyprenyl)benzene-1,4-diol + S-adenosyl-L-homocysteine + H(+). The protein operates within cofactor biosynthesis; ubiquinone biosynthesis. Methyltransferase required for the conversion of 2-polyprenyl-6-methoxy-1,4-benzoquinol (DDMQH2) to 2-polyprenyl-3-methyl-6-methoxy-1,4-benzoquinol (DMQH2). This Xenopus laevis (African clawed frog) protein is 2-methoxy-6-polyprenyl-1,4-benzoquinol methylase, mitochondrial.